A 139-amino-acid polypeptide reads, in one-letter code: Large ribosomal subunit protein uL16 (139 aa).

Belongs to the universal ribosomal protein uL16 family. As to quaternary structure, part of the 50S ribosomal subunit.

Its function is as follows. Binds 23S rRNA and is also seen to make contacts with the A and possibly P site tRNAs. This chain is Large ribosomal subunit protein uL16, found in Prosthecochloris aestuarii (strain DSM 271 / SK 413).